A 235-amino-acid polypeptide reads, in one-letter code: DNA repair protein RecO (235 aa).

The protein belongs to the RecO family.

Functionally, involved in DNA repair and RecF pathway recombination. The chain is DNA repair protein RecO from Enterobacter sp. (strain 638).